The primary structure comprises 849 residues: Trehalose-phosphatase (849 aa).

The segment at 1-558 (MPSGAQGNTQ…VKALESHMTT (558 aa)) is glycosyltransferase.

In the N-terminal section; belongs to the glycosyltransferase 20 family. It in the C-terminal section; belongs to the trehalose phosphatase family. The cofactor is Mg(2+).

It localises to the cytoplasm. Its subcellular location is the nucleus. It carries out the reaction alpha,alpha-trehalose 6-phosphate + H2O = alpha,alpha-trehalose + phosphate. It participates in carbohydrate biosynthesis. In terms of biological role, phosphatase catalytic subunit of the trehalose synthase complex that catalyzes the production of trehalose from glucose-6-phosphate and UDP-glucose in a two step process. The chain is Trehalose-phosphatase (tps2) from Schizosaccharomyces pombe (strain 972 / ATCC 24843) (Fission yeast).